A 396-amino-acid polypeptide reads, in one-letter code: Ribosomal RNA large subunit methyltransferase I (396 aa).

One can recognise a PUA domain in the interval 2–81; the sequence is SVRLVLAKGR…ESIDIAFFSR (80 aa).

Belongs to the methyltransferase superfamily. RlmI family.

It is found in the cytoplasm. The enzyme catalyses cytidine(1962) in 23S rRNA + S-adenosyl-L-methionine = 5-methylcytidine(1962) in 23S rRNA + S-adenosyl-L-homocysteine + H(+). Its function is as follows. Specifically methylates the cytosine at position 1962 (m5C1962) of 23S rRNA. The polypeptide is Ribosomal RNA large subunit methyltransferase I (Shigella flexneri serotype 5b (strain 8401)).